The primary structure comprises 632 residues: Phosphoglucomutase, chloroplastic (632 aa).

Residues 1-72 constitute a chloroplast transit peptide; it reads MAMESALTST…PSSPSTSVAQ (72 aa). The alpha-D-glucose 1,6-bisphosphate site is built by R97 and S190. The Phosphoserine intermediate role is filled by S190. Positions 190, 355, 357, and 359 each coordinate Mg(2+). S190 carries the post-translational modification Phosphoserine. D359, R360, T423, E442, S444, and K455 together coordinate alpha-D-glucose 1,6-bisphosphate.

Belongs to the phosphohexose mutase family. As to quaternary structure, monomer. It depends on Mg(2+) as a cofactor.

It localises to the plastid. Its subcellular location is the chloroplast. The catalysed reaction is alpha-D-glucose 1-phosphate = alpha-D-glucose 6-phosphate. The enzyme catalyses O-phospho-L-seryl-[protein] + alpha-D-glucose 1-phosphate = alpha-D-glucose 1,6-bisphosphate + L-seryl-[protein]. It catalyses the reaction alpha-D-glucose 1,6-bisphosphate + L-seryl-[protein] = O-phospho-L-seryl-[protein] + alpha-D-glucose 6-phosphate. With respect to regulation, inhibited by the Calvin cycle intermediates fructose-1,6-bisphosphate and ribulose-1,5-bisphosphate. Functionally, catalyzes the reversible isomerization of alpha-D-glucose 1-phosphate to alpha-D-glucose 6-phosphate. The mechanism proceeds via the intermediate compound alpha-D-glucose 1,6-bisphosphate. This enzyme participates in both the breakdown and synthesis of glucose. Promotes gravitropic responses, negative in shoots but positive in roots, by facilitating starch granules (statoliths) formation. The polypeptide is Phosphoglucomutase, chloroplastic (PGMP) (Solanum tuberosum (Potato)).